The chain runs to 625 residues: MAKVIGIDLGTTNSCVSVYERGESKVIPNKEGKNTTPSVVAFTDKGEVLVGDVAKRQAVTNPEKTIYSIKRIMGLMSNEKNAQEAKARLPYHVVDRNGACAVEIAGKVYTPQEISAKILMKLKEDAEAYLGEKVVDAVITVPAYFNDSQRKATKEAGTIAGLNVLRIINEPTAAALAYGLDKKEAEKILVYDLGGGTFDVTVLETGDSVVEVLATGGNAFLGGDDFDNLIIDWLVNEFKNETGIDLKKDVMASQRLKEAAENAKKELSSAQETEINLPFITADATGPKHLVKKLTRAKFEGMIESLVAETITKINEVVKEAGLSKSDVKEVVMVGGSTRVPLVQEEVKKAFGKELNKSVNPDEVVAIGAAIQGAVIKGDVKDVLLLDVTPLSLGIETLGGVMTKIIEKGTTIPVKKNQTFSTAEDNQSAVTIHVLQGEREFARDNKSLGQFNLEGIPSAPRGVPQIEVEFDIDANGILTVSAKDKATGKAQNITISGSSGLSEDEINNMVKDAELHKEDDKKRKEAVEARNSADALVHQTEKSMNELGEKVPAEDRSNIEAALNDLKETLKDENASKEQIDAKVQALSAASHKLAEAMYKKDDNASGEQSGGKKKDDDVIDAEVE.

T197 carries the post-translational modification Phosphothreonine; by autocatalysis. The interval 598-625 is disordered; it reads MYKKDDNASGEQSGGKKKDDDVIDAEVE.

This sequence belongs to the heat shock protein 70 family.

In terms of biological role, acts as a chaperone. The polypeptide is Chaperone protein DnaK (Campylobacter curvus (strain 525.92)).